The sequence spans 305 residues: Ribosomal RNA small subunit methyltransferase H (305 aa).

S-adenosyl-L-methionine is bound by residues 30 to 32, Asp-49, Phe-74, Asp-96, and Gln-103; that span reads GGH.

Belongs to the methyltransferase superfamily. RsmH family.

The protein resides in the cytoplasm. It carries out the reaction cytidine(1402) in 16S rRNA + S-adenosyl-L-methionine = N(4)-methylcytidine(1402) in 16S rRNA + S-adenosyl-L-homocysteine + H(+). Functionally, specifically methylates the N4 position of cytidine in position 1402 (C1402) of 16S rRNA. This is Ribosomal RNA small subunit methyltransferase H from Francisella tularensis subsp. mediasiatica (strain FSC147).